Reading from the N-terminus, the 438-residue chain is Vasoactive intestinal polypeptide receptor 2 (438 aa).

A signal peptide spans 1–23 (MRTLLPPALLTCWLLAPVNSIHP). Topologically, residues 24 to 124 (ECRFHLEIQE…EDESKITFYI (101 aa)) are extracellular. Cystine bridges form between Cys-38-Cys-61, Cys-52-Cys-93, and Cys-75-Cys-109. N-linked (GlcNAc...) asparagine glycans are attached at residues Asn-58, Asn-88, and Asn-92. The chain crosses the membrane as a helical span at residues 125–150 (LVKAIYTLGYSVSLMSLATGSIILCL). Over 151–158 (FRKLHCTR) the chain is Cytoplasmic. Residues 159–180 (NYIHLNLFLSFILRAISVLVKD) traverse the membrane as a helical segment. The Extracellular portion of the chain corresponds to 181–203 (DVLYSSSGTLHCPDQPSSWVGCK). A disulfide bond links Cys-202 and Cys-271. Residues 204 to 228 (LSLVFLQYCIMANFFWLLVEGLYLH) form a helical membrane-spanning segment. At 229–239 (TLLVAMLPPRR) the chain is on the cytoplasmic side. Residues 240 to 261 (CFLAYLLIGWGLPTVCIGAWTA) form a helical membrane-spanning segment. Residues 262 to 280 (ARLYLEDTGCWDTNDHSVP) are Extracellular-facing. The chain crosses the membrane as a helical span at residues 281–304 (WWVIRIPILISIIVNFVLFISIIR). The Cytoplasmic segment spans residues 305-325 (ILLQKLTSPDVGGNDQSQYKR). A helical transmembrane segment spans residues 326 to 346 (LAKSTLLLIPLFGVHYMVFAV). The Extracellular portion of the chain corresponds to 347 to 354 (FPISISSK). Residues 355–378 (YQILFELCLGSFQGLVVAVLYCFL) traverse the membrane as a helical segment. Topologically, residues 379–438 (NSEVQCELKRKWRSRCPTPSASRDYRVCGSSFSRNGSEGALQFHRGSRAQSFLQTETSVI) are cytoplasmic.

The protein belongs to the G-protein coupled receptor 2 family. As to quaternary structure, interacts with ADCYAP1/PACAP (via N-terminal extracellular domain); activated by PACAP27 and CAPAC38 neuropeptides. Interacts with VIP; the interaction results in VIPR1 activation. As to expression, expressed in CD4+ T-cells, but not in CD8+ T-cells. Expressed in the T-cell lines Jurkat, Peer, MOLT-4, HSB, YT and SUP-T1, but not in the T-cell lines HARRIS and HuT 78.

It localises to the cell membrane. Functionally, g protein-coupled receptor activated by the neuropeptides vasoactive intestinal peptide (VIP) and pituitary adenylate cyclase-activating polypeptide (ADCYAP1/PACAP). Binds VIP and both PACAP27 and PACAP38 bioactive peptides with the following order of potency PACAP38 = VIP &gt; PACAP27. Ligand binding causes a conformation change that triggers signaling via guanine nucleotide-binding proteins (G proteins) and modulates the activity of downstream effectors. Activates cAMP-dependent pathway. May be coupled to phospholipase C. The polypeptide is Vasoactive intestinal polypeptide receptor 2 (Homo sapiens (Human)).